A 506-amino-acid polypeptide reads, in one-letter code: Photosystem II CP47 reaction center protein (506 aa).

Helical transmembrane passes span S21–S36, I101–W115, G140–F156, I203–S218, V237–V252, and S457–R472.

This sequence belongs to the PsbB/PsbC family. PsbB subfamily. In terms of assembly, PSII is composed of 1 copy each of membrane proteins PsbA, PsbB, PsbC, PsbD, PsbE, PsbF, PsbH, PsbI, PsbJ, PsbK, PsbL, PsbM, PsbT, PsbX, PsbY, PsbZ, Psb30/Ycf12, at least 3 peripheral proteins of the oxygen-evolving complex and a large number of cofactors. It forms dimeric complexes. Requires Binds multiple chlorophylls. PSII binds additional chlorophylls, carotenoids and specific lipids. as cofactor.

The protein resides in the plastid. It localises to the chloroplast thylakoid membrane. Its function is as follows. One of the components of the core complex of photosystem II (PSII). It binds chlorophyll and helps catalyze the primary light-induced photochemical processes of PSII. PSII is a light-driven water:plastoquinone oxidoreductase, using light energy to abstract electrons from H(2)O, generating O(2) and a proton gradient subsequently used for ATP formation. This is Photosystem II CP47 reaction center protein from Cucumis sativus (Cucumber).